A 317-amino-acid chain; its full sequence is MTDKLTSLRQFTTVVADTGDIAAMKLYQPQDATTNPSLILNAAQIPEYRKLIDDAVAWAKQQSSDRAQQVVDATDKLAVNIGLEILKLVPGRISTEVDARLSYDTEASIAKAKRIIKLYNDAGISNDRILIKLASTWQGIRAAEQLEKEGINCNLTLLFSFAQARACAEAGVYLISPFVGRILDWYKANTDKKDYAPAEDPGVVSVTEIYEYYKQHGYETVVMGASFRNVGEILELAGCDRLTIAPALLKELAESEGAIERKLSFSGEVKARPERITEAEFLWQHHQDPMAVDKLADGIRKFAVDQEKLEKMIGDLL.

K132 functions as the Schiff-base intermediate with substrate in the catalytic mechanism.

This sequence belongs to the transaldolase family. Type 1 subfamily. In terms of assembly, homodimer.

It is found in the cytoplasm. It catalyses the reaction D-sedoheptulose 7-phosphate + D-glyceraldehyde 3-phosphate = D-erythrose 4-phosphate + beta-D-fructose 6-phosphate. The protein operates within carbohydrate degradation; pentose phosphate pathway; D-glyceraldehyde 3-phosphate and beta-D-fructose 6-phosphate from D-ribose 5-phosphate and D-xylulose 5-phosphate (non-oxidative stage): step 2/3. In terms of biological role, transaldolase is important for the balance of metabolites in the pentose-phosphate pathway. The polypeptide is Transaldolase 1 (Salmonella paratyphi A (strain ATCC 9150 / SARB42)).